We begin with the raw amino-acid sequence, 323 residues long: Methionyl-tRNA formyltransferase (323 aa).

115–118 serves as a coordination point for (6S)-5,6,7,8-tetrahydrofolate; the sequence is SLLP.

The protein belongs to the Fmt family.

It carries out the reaction L-methionyl-tRNA(fMet) + (6R)-10-formyltetrahydrofolate = N-formyl-L-methionyl-tRNA(fMet) + (6S)-5,6,7,8-tetrahydrofolate + H(+). In terms of biological role, attaches a formyl group to the free amino group of methionyl-tRNA(fMet). The formyl group appears to play a dual role in the initiator identity of N-formylmethionyl-tRNA by promoting its recognition by IF2 and preventing the misappropriation of this tRNA by the elongation apparatus. This chain is Methionyl-tRNA formyltransferase, found in Lactococcus lactis subsp. cremoris (strain MG1363).